Reading from the N-terminus, the 127-residue chain is Putative 2Fe-2S ferredoxin (127 aa).

C23, C54, and C58 together coordinate [2Fe-2S] cluster.

Belongs to the 2Fe2S Shethna-type ferredoxin family. Requires [2Fe-2S] cluster as cofactor.

In terms of biological role, ferredoxins are iron-sulfur proteins that transfer electrons in a wide variety of metabolic reactions. The protein is Putative 2Fe-2S ferredoxin (cbiW) of Priestia megaterium (Bacillus megaterium).